The primary structure comprises 211 residues: Mediator of RNA polymerase II transcription subunit 18 (211 aa).

It belongs to the Mediator complex subunit 18 family. As to quaternary structure, component of the Mediator complex.

The protein localises to the nucleus. Component of the Mediator complex, a coactivator involved in the regulated transcription of nearly all RNA polymerase II-dependent genes. Mediator functions as a bridge to convey information from gene-specific regulatory proteins to the basal RNA polymerase II transcription machinery. Mediator is recruited to promoters by direct interactions with regulatory proteins and serves as a scaffold for the assembly of a functional preinitiation complex with RNA polymerase II and the general transcription factors. This Anopheles gambiae (African malaria mosquito) protein is Mediator of RNA polymerase II transcription subunit 18 (MED18).